Here is a 435-residue protein sequence, read N- to C-terminus: MKIFSPIRLVLAIAALMSVFSAPAFARVEININKGNVEPLPIAITDFMSSDGIGAQVSAVIAADLQRSGLFAPVNKNAFIEKISNPDQQPRFEDWKVINAQALVTGRVTRESDGRLRAEFRLWDTFAGQQLSGQQFFTQPENWRRVAHIIADAIYERVTGEKGYFDTRVVFVSESGPKTARKRQLSIMDQDGFNVRNLTNSNDIVLTPRFSPNRQEVTYMSFEGQQPRVYLLQLETGQREVVGNFPGMTFSPRFSPDGQKVIMSLQQDGNANIYTMDLRSRTTTRLTNTAAIDTAPSYSPDGQRVAFESDRGGRQQIYVMNADGSGQQRVSFGDGSYSTPVWSPRGDLIAFTKQSGGKFSIGVMKTDGSGERILTSGFHNEGPTWAPNGRVLMFFRQNAGAGGPQLYSIDLTGYNEQLIKTPTFASDPAWSPLLD.

Residues 1–26 form the signal peptide; the sequence is MKIFSPIRLVLAIAALMSVFSAPAFA.

The protein belongs to the TolB family. In terms of assembly, the Tol-Pal system is composed of five core proteins: the inner membrane proteins TolA, TolQ and TolR, the periplasmic protein TolB and the outer membrane protein Pal. They form a network linking the inner and outer membranes and the peptidoglycan layer.

It localises to the periplasm. In terms of biological role, part of the Tol-Pal system, which plays a role in outer membrane invagination during cell division and is important for maintaining outer membrane integrity. In Agrobacterium fabrum (strain C58 / ATCC 33970) (Agrobacterium tumefaciens (strain C58)), this protein is Tol-Pal system protein TolB.